The following is a 163-amino-acid chain: Probable ribosome biogenesis protein RLP24 (163 aa).

It belongs to the eukaryotic ribosomal protein eL24 family. As to quaternary structure, associated with nucleolar and cytoplasmic pre-60S particles. At the end of biogenesis it dissociates from cytoplasmic pre-60S particles and is likely to be exchanged for its ribosomal homolog, RPL24.

It localises to the nucleus. The protein localises to the nucleolus. Involved in the biogenesis of the 60S ribosomal subunit. Ensures the docking of GTPBP4/NOG1 to pre-60S particles. The chain is Probable ribosome biogenesis protein RLP24 (Rsl24d1) from Mus musculus (Mouse).